The sequence spans 896 residues: Desmocollin-3 (896 aa).

Positions Met1 to Arg27 are cleaved as a signal peptide. Positions Ala28 to Arg135 are excised as a propeptide. Cadherin domains follow at residues Arg136–Phe243, Thr244–Phe355, Arg356–Cys471, Thr472–Gln579, and Glu580–Lys690. Topologically, residues Arg136 to Lys690 are extracellular. Asn166 is a glycosylation site (N-linked (GlcNAc...) asparagine). N-linked (GlcNAc...) asparagine glycosylation is found at Asn392, Asn546, and Asn629. The chain crosses the membrane as a helical span at residues Trp691–Val711. At Cys712–Arg896 the chain is on the cytoplasmic side.

In terms of assembly, may form homodimers. Interacts with DSG1; there is evidence to suggest that the interaction promotes cell-cell adhesion of keratinocytes. As to expression, expressed throughout the basal and spinous layer of the epidermis with weak expression in the granular layer (at protein level). Also expressed in the buccal mucosa, esophagus and cervix (at protein level).

The protein localises to the cell membrane. It is found in the cell junction. Its subcellular location is the desmosome. The protein resides in the cytoplasm. In terms of biological role, a component of desmosome cell-cell junctions which are required for positive regulation of cellular adhesion. Required for cell-cell adhesion in the epidermis, as a result required for the maintenance of the dermal cohesion and the dermal barrier function. Required for cell-cell adhesion of epithelial cell layers surrounding the telogen hair club, as a result plays an important role in telogen hair shaft anchorage. Essential for successful completion of embryo compaction and embryo development. This Homo sapiens (Human) protein is Desmocollin-3 (DSC3).